The sequence spans 1178 residues: Niemann-Pick type C1-related protein (1178 aa).

An N-linked (GlcNAc...) asparagine glycan is attached at asparagine 41. A run of 2 helical transmembrane segments spans residues 157-177 (PWLF…GIFL) and 412-432 (VVEW…TSVV). The SSD domain occupies 414-570 (EWLRLCAAVL…LTFFLAGLSL (157 aa)). N-linked (GlcNAc...) asparagine glycosylation is present at asparagine 433. The next 4 membrane-spanning stretches (helical) occupy residues 448 to 468 (GALA…LCGV), 478 to 498 (PFLA…AYSL), 516 to 536 (AGLS…IGAL), and 545 to 565 (FCII…TFFL). Residue asparagine 621 is glycosylated (N-linked (GlcNAc...) asparagine). A helical transmembrane segment spans residues 789 to 809 (ATVLVIFAAVTALAIYGATTL). Residues asparagine 917 and asparagine 943 are each glycosylated (N-linked (GlcNAc...) asparagine). 5 consecutive transmembrane segments (helical) span residues 986–1006 (FTLT…LLLI), 1013–1033 (IIVV…MALI), 1037–1057 (LSMI…DFTI), 1080–1100 (IVMG…ILAL), and 1114–1134 (MMFM…PVVL).

This sequence belongs to the patched family.

It is found in the inner membrane complex. The enzyme catalyses cholesterol(in) = cholesterol(out). In terms of biological role, likely facilitates the efflux of cholesterol and gangliosides from membranes. Plays a role in the regulation of lipid homeostasis. The polypeptide is Niemann-Pick type C1-related protein (Toxoplasma gondii (strain ATCC 50611 / Me49)).